A 447-amino-acid polypeptide reads, in one-letter code: GTPase Der (447 aa).

EngA-type G domains lie at 3 to 167 (PVIA…QLPE) and 180 to 353 (IRLA…KAAT). GTP-binding positions include 9–16 (GRPNVGKS), 56–60 (DTGGF), 119–122 (NKAE), 186–193 (GRPNVGKS), 233–237 (DTAGL), and 298–301 (NKWD). The 86-residue stretch at 353–438 (TCKMPTPVLT…PLRIEMKTSR (86 aa)) folds into the KH-like domain.

This sequence belongs to the TRAFAC class TrmE-Era-EngA-EngB-Septin-like GTPase superfamily. EngA (Der) GTPase family. Associates with the 50S ribosomal subunit.

In terms of biological role, GTPase that plays an essential role in the late steps of ribosome biogenesis. In Paracidovorax citrulli (strain AAC00-1) (Acidovorax citrulli), this protein is GTPase Der.